We begin with the raw amino-acid sequence, 173 residues long: RNA pyrophosphohydrolase (173 aa).

Residues 13-166 (PYRPCVGLMI…KRKVYEEVVA (154 aa)) enclose the Nudix hydrolase domain. Residues 54-75 (GGIDKGEEPLQAAERELYEETG) carry the Nudix box motif.

This sequence belongs to the Nudix hydrolase family. RppH subfamily. A divalent metal cation serves as cofactor.

Accelerates the degradation of transcripts by removing pyrophosphate from the 5'-end of triphosphorylated RNA, leading to a more labile monophosphorylated state that can stimulate subsequent ribonuclease cleavage. The sequence is that of RNA pyrophosphohydrolase from Mesorhizobium japonicum (strain LMG 29417 / CECT 9101 / MAFF 303099) (Mesorhizobium loti (strain MAFF 303099)).